Consider the following 110-residue polypeptide: NAD(P)H-quinone oxidoreductase subunit M (110 aa).

It belongs to the complex I NdhM subunit family. As to quaternary structure, NDH-1 can be composed of about 15 different subunits; different subcomplexes with different compositions have been identified which probably have different functions.

It is found in the cellular thylakoid membrane. It carries out the reaction a plastoquinone + NADH + (n+1) H(+)(in) = a plastoquinol + NAD(+) + n H(+)(out). The enzyme catalyses a plastoquinone + NADPH + (n+1) H(+)(in) = a plastoquinol + NADP(+) + n H(+)(out). Its function is as follows. NDH-1 shuttles electrons from an unknown electron donor, via FMN and iron-sulfur (Fe-S) centers, to quinones in the respiratory and/or the photosynthetic chain. The immediate electron acceptor for the enzyme in this species is believed to be plastoquinone. Couples the redox reaction to proton translocation, and thus conserves the redox energy in a proton gradient. Cyanobacterial NDH-1 also plays a role in inorganic carbon-concentration. The chain is NAD(P)H-quinone oxidoreductase subunit M from Synechococcus elongatus (strain ATCC 33912 / PCC 7942 / FACHB-805) (Anacystis nidulans R2).